The primary structure comprises 238 residues: ATP synthase subunit a (238 aa).

7 helical membrane passes run 35–55 (SNVI…TLAT), 61–81 (VPSG…SFVV), 94–114 (FLCA…VPGL), 128–148 (ALTV…AGYI), 151–171 (FMGP…ISHL), 190–210 (IVLV…MYFL), and 211–231 (FSLA…IYLK).

It belongs to the ATPase A chain family. F-type ATPases have 2 components, CF(1) - the catalytic core - and CF(0) - the membrane proton channel. CF(1) has five subunits: alpha(3), beta(3), gamma(1), delta(1), epsilon(1). CF(0) has three main subunits: a(1), b(2) and c(9-12). The alpha and beta chains form an alternating ring which encloses part of the gamma chain. CF(1) is attached to CF(0) by a central stalk formed by the gamma and epsilon chains, while a peripheral stalk is formed by the delta and b chains.

The protein resides in the cell inner membrane. Its function is as follows. Key component of the proton channel; it plays a direct role in the translocation of protons across the membrane. The sequence is that of ATP synthase subunit a from Solidesulfovibrio magneticus (strain ATCC 700980 / DSM 13731 / RS-1) (Desulfovibrio magneticus).